A 203-amino-acid polypeptide reads, in one-letter code: Recombination protein RecR (203 aa).

The C4-type zinc finger occupies 56–71; the sequence is CAVCGNVSDDERCRIC. Positions 79 to 179 constitute a Toprim domain; that stretch reads SVVCVVEEPK…TVTRIASGLP (101 aa).

The protein belongs to the RecR family.

May play a role in DNA repair. It seems to be involved in an RecBC-independent recombinational process of DNA repair. It may act with RecF and RecO. The protein is Recombination protein RecR of Mycobacterium avium (strain 104).